We begin with the raw amino-acid sequence, 293 residues long: Nucleotide-binding protein BBR47_52620 (293 aa).

17–24 (GMSGAGKT) contributes to the ATP binding site. GTP is bound at residue 68-71 (DLRG).

Belongs to the RapZ-like family.

In terms of biological role, displays ATPase and GTPase activities. The sequence is that of Nucleotide-binding protein BBR47_52620 from Brevibacillus brevis (strain 47 / JCM 6285 / NBRC 100599).